Consider the following 585-residue polypeptide: Arginine--tRNA ligase (585 aa).

The 'HIGH' region signature appears at 126–136 (PNIAKEMHVGH).

This sequence belongs to the class-I aminoacyl-tRNA synthetase family. In terms of assembly, monomer.

It is found in the cytoplasm. It catalyses the reaction tRNA(Arg) + L-arginine + ATP = L-arginyl-tRNA(Arg) + AMP + diphosphate. This is Arginine--tRNA ligase from Rippkaea orientalis (strain PCC 8801 / RF-1) (Cyanothece sp. (strain PCC 8801)).